Here is a 564-residue protein sequence, read N- to C-terminus: Dihydroxy-acid dehydratase (564 aa).

A [2Fe-2S] cluster-binding site is contributed by cysteine 55. Aspartate 87 contributes to the Mg(2+) binding site. Residue cysteine 128 participates in [2Fe-2S] cluster binding. Mg(2+) contacts are provided by aspartate 129 and lysine 130. Lysine 130 bears the N6-carboxylysine mark. Cysteine 200 contributes to the [2Fe-2S] cluster binding site. Glutamate 452 serves as a coordination point for Mg(2+). The active-site Proton acceptor is serine 478.

Belongs to the IlvD/Edd family. As to quaternary structure, homodimer. [2Fe-2S] cluster serves as cofactor. The cofactor is Mg(2+).

It catalyses the reaction (2R)-2,3-dihydroxy-3-methylbutanoate = 3-methyl-2-oxobutanoate + H2O. The catalysed reaction is (2R,3R)-2,3-dihydroxy-3-methylpentanoate = (S)-3-methyl-2-oxopentanoate + H2O. Its pathway is amino-acid biosynthesis; L-isoleucine biosynthesis; L-isoleucine from 2-oxobutanoate: step 3/4. It participates in amino-acid biosynthesis; L-valine biosynthesis; L-valine from pyruvate: step 3/4. Its function is as follows. Functions in the biosynthesis of branched-chain amino acids. Catalyzes the dehydration of (2R,3R)-2,3-dihydroxy-3-methylpentanoate (2,3-dihydroxy-3-methylvalerate) into 2-oxo-3-methylpentanoate (2-oxo-3-methylvalerate) and of (2R)-2,3-dihydroxy-3-methylbutanoate (2,3-dihydroxyisovalerate) into 2-oxo-3-methylbutanoate (2-oxoisovalerate), the penultimate precursor to L-isoleucine and L-valine, respectively. This is Dihydroxy-acid dehydratase from Polaromonas sp. (strain JS666 / ATCC BAA-500).